We begin with the raw amino-acid sequence, 462 residues long: Nuclear factor interleukin-3-regulated protein (462 aa).

Positions 1-22 (MQLRKMQTIKKEPAPLDPTSSS) are disordered. Lys-24 is covalently cross-linked (Glycyl lysine isopeptide (Lys-Gly) (interchain with G-Cter in SUMO2)). The region spanning 73–136 (DAMYWEKRRK…GLISSTAYAQ (64 aa)) is the bZIP domain. A basic motif region spans residues 79-95 (KRRKNNEAAKRSREKRR). A leucine-zipper region spans residues 99 to 106 (LVLENKLI). A disordered region spans residues 188–214 (SDVSEVSSVEHTQESPAQGGCRSPENK). Residue Lys-214 forms a Glycyl lysine isopeptide (Lys-Gly) (interchain with G-Cter in SUMO2) linkage. Lys-219 participates in a covalent cross-link: Glycyl lysine isopeptide (Lys-Gly) (interchain with G-Cter in SUMO1); alternate. A Glycyl lysine isopeptide (Lys-Gly) (interchain with G-Cter in SUMO2); alternate cross-link involves residue Lys-219. Residues 259 to 298 (PPLLQVHGSTSNSPRTSEADEGVVGKSSDGEDEQQVPKGP) form a disordered region. Positions 265 to 274 (HGSTSNSPRT) are enriched in polar residues. The necessary for transcriptional repression and sufficient for interaction with PER2 stretch occupies residues 281 to 420 (VVGKSSDGED…FKTGVVEVKD (140 aa)). Ser-301 is modified (phosphoserine). Glycyl lysine isopeptide (Lys-Gly) (interchain with G-Cter in SUMO2) cross-links involve residues Lys-314, Lys-326, Lys-332, Lys-337, and Lys-350. Ser-353 is modified (phosphoserine). Residues Lys-360, Lys-394, Lys-401, Lys-406, Lys-412, Lys-419, Lys-424, Lys-434, and Lys-448 each participate in a glycyl lysine isopeptide (Lys-Gly) (interchain with G-Cter in SUMO2) cross-link.

Belongs to the bZIP family. NFIL3 subfamily. Homodimer. Binds DNA as a dimer. Interacts with DR1. Interacts with PER2 and CRY2. Interacts with NR0B2. Interacts with NR1D1. Interacts with MYSM1. In terms of tissue distribution, expressed in suprachiasmatic nucleus and liver (at protein level). Expressed in suprachiasmatic nucleus, hippocampus, gyrus dentatus, piriform cortex, internal granular layer of olfactory bulb, dorsomedial hypothalamic nucleus, pontine nuclei, granular layer of cerebellum, liver and calvariae osteoblasts. Expressed in natural killer cell precursors in bone marrow.

The protein resides in the nucleus. Acts as a transcriptional regulator that recognizes and binds to the sequence 5'-[GA]TTA[CT]GTAA[CT]-3', a sequence present in many cellular and viral promoters. Represses transcription from promoters with activating transcription factor (ATF) sites. Represses promoter activity in osteoblasts. Represses transcriptional activity of PER1. Represses transcriptional activity of PER2 via the B-site on the promoter. Activates transcription from the interleukin-3 promoter in T-cells. Competes for the same consensus-binding site with PAR DNA-binding factors (DBP, HLF and TEF). Component of the circadian clock that acts as a negative regulator for the circadian expression of PER2 oscillation in the cell-autonomous core clock. Protects pro-B cells from programmed cell death. Represses the transcription of CYP2A5. Positively regulates the expression and activity of CES2 by antagonizing the repressive action of NR1D1 on CES2. Required for the development of natural killer cell precursors. The polypeptide is Nuclear factor interleukin-3-regulated protein (Nfil3) (Mus musculus (Mouse)).